The following is a 1370-amino-acid chain: DNA-directed RNA polymerase subunit beta (1370 aa).

This sequence belongs to the RNA polymerase beta chain family. As to quaternary structure, the RNAP catalytic core consists of 2 alpha, 1 beta, 1 beta' and 1 omega subunit. When a sigma factor is associated with the core the holoenzyme is formed, which can initiate transcription.

The catalysed reaction is RNA(n) + a ribonucleoside 5'-triphosphate = RNA(n+1) + diphosphate. Functionally, DNA-dependent RNA polymerase catalyzes the transcription of DNA into RNA using the four ribonucleoside triphosphates as substrates. This Geobacter metallireducens (strain ATCC 53774 / DSM 7210 / GS-15) protein is DNA-directed RNA polymerase subunit beta.